A 176-amino-acid polypeptide reads, in one-letter code: RNA polymerase sigma factor SigZ (176 aa).

The short motif at 30-43 (DLLQIVFMKIQVHL) is the Polymerase core binding element. Residues 125–144 (QKELSEKLGISYSGAKSRVQ) constitute a DNA-binding region (H-T-H motif).

It belongs to the sigma-70 factor family. ECF subfamily.

Functionally, sigma factors are initiation factors that promote the attachment of RNA polymerase to specific initiation sites and are then released. This chain is RNA polymerase sigma factor SigZ (sigZ), found in Bacillus subtilis (strain 168).